Reading from the N-terminus, the 156-residue chain is 6,7-dimethyl-8-ribityllumazine synthase (156 aa).

5-amino-6-(D-ribitylamino)uracil contacts are provided by residues Phe-22, 56-58 (AME), and 80-82 (AVI). 85 to 86 (ET) is a binding site for (2S)-2-hydroxy-3-oxobutyl phosphate. His-88 functions as the Proton donor in the catalytic mechanism. 5-amino-6-(D-ribitylamino)uracil is bound at residue Phe-113. Arg-127 contacts (2S)-2-hydroxy-3-oxobutyl phosphate.

It belongs to the DMRL synthase family.

The enzyme catalyses (2S)-2-hydroxy-3-oxobutyl phosphate + 5-amino-6-(D-ribitylamino)uracil = 6,7-dimethyl-8-(1-D-ribityl)lumazine + phosphate + 2 H2O + H(+). Its pathway is cofactor biosynthesis; riboflavin biosynthesis; riboflavin from 2-hydroxy-3-oxobutyl phosphate and 5-amino-6-(D-ribitylamino)uracil: step 1/2. Catalyzes the formation of 6,7-dimethyl-8-ribityllumazine by condensation of 5-amino-6-(D-ribitylamino)uracil with 3,4-dihydroxy-2-butanone 4-phosphate. This is the penultimate step in the biosynthesis of riboflavin. The polypeptide is 6,7-dimethyl-8-ribityllumazine synthase (Kosmotoga olearia (strain ATCC BAA-1733 / DSM 21960 / TBF 19.5.1)).